Reading from the N-terminus, the 214-residue chain is Redox-sensing transcriptional repressor Rex (214 aa).

The H-T-H motif DNA-binding region spans 17–56 (LYYRIFKRFHADQVEKASSKQIADAMGIDSATVRRDFSYF). Residue 91 to 96 (GCGNIG) coordinates NAD(+).

The protein belongs to the transcriptional regulatory Rex family. Homodimer.

It localises to the cytoplasm. Functionally, modulates transcription in response to changes in cellular NADH/NAD(+) redox state. The polypeptide is Redox-sensing transcriptional repressor Rex (Streptococcus pyogenes serotype M12 (strain MGAS9429)).